The sequence spans 433 residues: Schlafen-like protein 2 (433 aa).

One can recognise a B30.2/SPRY domain in the interval 1–168; that stretch reads MADTSPRESK…LSVNFGSQPF (168 aa). Residues 199–400 are SLFN-like fold; sequence EHVVVKLPFA…RRMASNKCVY (202 aa). Active-site residues include E211 and E216.

This sequence belongs to the Schlafen family. Component of the trimeric PUCH (precursor of 21U RNA 5'-end cleavage holoenzyme) complex; consisting of tofu-1, tofu-2 and either slfl-3 or slfl-4. Within the complex, interacts (via N-terminus) with tofu-1 (via N-terminus); the interaction stabilizes tofu-2 and may form a functional nuclease. Within the complex, interacts (via N-terminus) with slfl-3 (via N-terminus); the presence of tofu-1 is required for this interaction. It depends on Mg(2+) as a cofactor. Expressed in the germline.

Its subcellular location is the cytoplasm. The protein resides in the mitochondrion. Inhibited by ethylenediaminetetraacetic acid (EDTA). Component of the trimeric PUCH (precursor of 21U RNA 5'-end cleavage holoenzyme) complex, that acts as an endoribonuclease processing the 5'-end of precursor Piwi-interacting RNAs (piRNAs). The PUCH complex consists of tofu-1, tofu-2 and either slfl-3 or slfl-4, with tofu-2 exhibiting endoribonuclease activity. PUCH-mediated processing strictly requires a 7-methyl-G cap (m7 G-cap) and an uracil at position three (U3). PUCH also exhibits a strict bias for piRNA precursors with an A or G at position 1. Mature piRNA production is enhanced by the interaction of PUCH with the PETISCO complex, which is stabilizing piRNA precursors and allows their processing by PUCH. The protein is Schlafen-like protein 2 of Caenorhabditis elegans.